A 107-amino-acid chain; its full sequence is Large ribosomal subunit protein uL24 (107 aa).

This sequence belongs to the universal ribosomal protein uL24 family. In terms of assembly, part of the 50S ribosomal subunit.

In terms of biological role, one of two assembly initiator proteins, it binds directly to the 5'-end of the 23S rRNA, where it nucleates assembly of the 50S subunit. One of the proteins that surrounds the polypeptide exit tunnel on the outside of the subunit. The polypeptide is Large ribosomal subunit protein uL24 (Mycobacterium ulcerans (strain Agy99)).